A 246-amino-acid polypeptide reads, in one-letter code: 2-C-methyl-D-erythritol 4-phosphate cytidylyltransferase (246 aa).

The protein belongs to the IspD/TarI cytidylyltransferase family. IspD subfamily.

The catalysed reaction is 2-C-methyl-D-erythritol 4-phosphate + CTP + H(+) = 4-CDP-2-C-methyl-D-erythritol + diphosphate. Its pathway is isoprenoid biosynthesis; isopentenyl diphosphate biosynthesis via DXP pathway; isopentenyl diphosphate from 1-deoxy-D-xylulose 5-phosphate: step 2/6. Functionally, catalyzes the formation of 4-diphosphocytidyl-2-C-methyl-D-erythritol from CTP and 2-C-methyl-D-erythritol 4-phosphate (MEP). In Chlorobaculum tepidum (strain ATCC 49652 / DSM 12025 / NBRC 103806 / TLS) (Chlorobium tepidum), this protein is 2-C-methyl-D-erythritol 4-phosphate cytidylyltransferase.